The sequence spans 864 residues: Leucine--tRNA ligase (864 aa).

A 'HIGH' region motif is present at residues 42–52 (PYPSGKLHMGH). Positions 624 to 628 (KMSKS) match the 'KMSKS' region motif. Lys-627 lines the ATP pocket.

It belongs to the class-I aminoacyl-tRNA synthetase family.

Its subcellular location is the cytoplasm. It catalyses the reaction tRNA(Leu) + L-leucine + ATP = L-leucyl-tRNA(Leu) + AMP + diphosphate. The polypeptide is Leucine--tRNA ligase (Burkholderia pseudomallei (strain 1710b)).